We begin with the raw amino-acid sequence, 271 residues long: Hematopoietically-expressed homeobox protein Hhex (271 aa).

The tract at residues 1–138 (MQFPHPGPAA…PFLQRPLHKR (138 aa)) is interaction with SOX13. The residue at position 54 (Ser54) is a Phosphoserine. A DNA-binding region (homeobox) is located at residues 138–197 (RKGGQVRFSNDQTVELEKKFETQKYLSPPERKRLAKMLQLSERQVKTWFQNRRAKWRRLK). Residues 138 to 271 (RKGGQVRFSN…EGDKGYFNAG (134 aa)) are required for WNT signaling induction. Residues 195–271 (RLKQENPQSN…EGDKGYFNAG (77 aa)) form a disordered region. Polar residues predominate over residues 212-242 (LDTSCEQGQDLPSEQNKGASLDRSQCSPSPA). The segment covering 245-261 (EDPDSEISEDSDQEVDI) has biased composition (acidic residues).

As to quaternary structure, interacts with CD81; the interaction prevents nuclear translocation of HHEX. Interacts (via N-terminus) with SOX13; abolishes the SOX13-mediated inhibition of WNT-mediated transcriptional activity via competitive inhibition of the SOX13-TCF7 complex. Interacts with EIF4E; the interaction inhibits EIF4E-mediated mRNA nuclear export.

Its subcellular location is the nucleus. It is found in the nuclear body. The protein resides in the cytoplasm. Recognizes the DNA sequence 5'-ATTAA-3'. Transcriptional repressor. Activator of WNT-mediated transcription in conjunction with CTNNB1. Establishes anterior identity at two levels; acts early to enhance canonical WNT-signaling by repressing expression of TLE4, and acts later to inhibit NODAL-signaling by directly targeting NODAL. Inhibits EIF4E-mediated mRNA nuclear export. May play a role in hematopoietic differentiation. This is Hematopoietically-expressed homeobox protein Hhex (Hhex) from Mus musculus (Mouse).